A 176-amino-acid chain; its full sequence is Cytidylate kinase (176 aa).

7–15 (GPPGSGTTS) is a binding site for ATP.

It belongs to the cytidylate kinase family. Type 2 subfamily.

It localises to the cytoplasm. It catalyses the reaction CMP + ATP = CDP + ADP. It carries out the reaction dCMP + ATP = dCDP + ADP. The protein is Cytidylate kinase of Methanosphaerula palustris (strain ATCC BAA-1556 / DSM 19958 / E1-9c).